The following is a 117-amino-acid chain: Ig kappa chain V region 12F2 (117 aa).

The signal sequence occupies residues 1-6 (LPGARC). The interval 7–29 (AYDMTQTPASVEVAVGGTVTIKC) is framework-1. C29 and C86 are joined by a disulfide. The segment at 30–40 (QASQSISTYLS) is complementarity-determining-1. The tract at residues 41–55 (WYQQKPGQRPKLLIY) is framework-2. Residues 56 to 62 (RASTLAS) form a complementarity-determining-2 region. The segment at 63–94 (GVSSRFKGSGSGTEFTLTISGVECADAATYYC) is framework-3. Positions 95–106 (QQGWSSSNVENV) are complementarity-determining-3. The interval 107 to 116 (FGGGTEVVVK) is framework-4.

The chain is Ig kappa chain V region 12F2 from Oryctolagus cuniculus (Rabbit).